The chain runs to 449 residues: Hyaluronidase (449 aa).

A signal peptide spans 1 to 23 (MYHLWIKCLAAWIFLKRFNGVHV). Disulfide bonds link Cys47/Cys340 and Cys211/Cys227. Residues Asn67, Asn103, and Asn111 are each glycosylated (N-linked (GlcNAc...) asparagine). The active-site Proton donor is the Glu135. An N-linked (GlcNAc...) asparagine glycan is attached at Asn153. Asn357 carries an N-linked (GlcNAc...) asparagine glycan. 3 cysteine pairs are disulfide-bonded: Cys365–Cys376, Cys370–Cys427, and Cys429–Cys438. N-linked (GlcNAc...) asparagine glycosylation is present at Asn401. One can recognise an EGF-like domain in the interval 427 to 438 (CQCYQGWKGLYC).

It belongs to the glycosyl hydrolase 56 family. Monomer. Expressed by the venom gland.

The protein resides in the secreted. The catalysed reaction is Random hydrolysis of (1-&gt;4)-linkages between N-acetyl-beta-D-glucosamine and D-glucuronate residues in hyaluronate.. In terms of biological role, snake venom endo-hyaluronidase that degrades hyaluronan to smaller oligosaccharide fragments. In venom, it is not toxic by itself, but increases the diffusion of other venom proteins by degrading the extracellular matrix. In addition, it displays antiedematogenic activity. The protein is Hyaluronidase of Crotalus adamanteus (Eastern diamondback rattlesnake).